A 393-amino-acid chain; its full sequence is Protein TsgA (393 aa).

Transmembrane regions (helical) follow at residues 11–31, 51–71, 78–98, 101–121, 134–154, 162–182, 206–226, 245–265, 273–293, 297–317, 332–352, and 361–381; these read WISFLSYALTGALVIVTGMVM, FLNAGILISIFLNAWLMEIVP, FGFLLMVLAVAGLMFSHSLAL, AAMFILGVVSGITMSIGTFLI, LLFTDSFFSMAGMIFPMIAAF, WYWVYACIGLVYVAIFILTFG, IGVLFLSVAALCYILGQLGFI, TLVSNFWMSYMVGMWAFSFIL, ILTVLAGLAAILMYVFNTGTP, AWSILTLGFFSSAIYTTIITL, FVLTCGTIGTMLTFVVTGPIV, and LLTANGLYAVVFVMCFLLGFV.

Belongs to the major facilitator superfamily. TsgA family.

It is found in the cell inner membrane. The sequence is that of Protein TsgA from Shigella dysenteriae serotype 1 (strain Sd197).